Reading from the N-terminus, the 520-residue chain is Cholesterol side-chain cleavage enzyme, mitochondrial (520 aa).

A mitochondrion-targeting transit peptide spans 1-39 (MLARGLPLRSALVKACPPILSTVGEGWGHHRVGTGEGAG). Cys461 serves as a coordination point for heme.

It belongs to the cytochrome P450 family. As to quaternary structure, interacts with FDX1/adrenodoxin. Requires heme as cofactor. As to expression, detected in adrenal cortex and corpus luteum (at protein level).

The protein localises to the mitochondrion inner membrane. The catalysed reaction is 6 reduced [adrenodoxin] + cholesterol + 3 O2 + 6 H(+) = 4-methylpentanal + pregnenolone + 6 oxidized [adrenodoxin] + 4 H2O. It carries out the reaction 2 reduced [adrenodoxin] + cholesterol + O2 + 2 H(+) = (22R)-hydroxycholesterol + 2 oxidized [adrenodoxin] + H2O. It catalyses the reaction (22R)-hydroxycholesterol + 2 reduced [adrenodoxin] + O2 + 2 H(+) = (20R,22R)-20,22-dihydroxycholesterol + 2 oxidized [adrenodoxin] + H2O. The enzyme catalyses (20R,22R)-20,22-dihydroxycholesterol + 2 reduced [adrenodoxin] + O2 + 2 H(+) = 4-methylpentanal + pregnenolone + 2 oxidized [adrenodoxin] + 2 H2O. It participates in lipid metabolism; C21-steroid hormone metabolism. Its pathway is steroid metabolism; cholesterol metabolism. Its function is as follows. A cytochrome P450 monooxygenase that catalyzes the side-chain hydroxylation and cleavage of cholesterol to pregnenolone, the precursor of most steroid hormones. Catalyzes three sequential oxidation reactions of cholesterol, namely the hydroxylation at C22 followed with the hydroxylation at C20 to yield 20R,22R-hydroxycholesterol that is further cleaved between C20 and C22 to yield the C21-steroid pregnenolone and 4-methylpentanal. Mechanistically, uses molecular oxygen inserting one oxygen atom into a substrate and reducing the second into a water molecule. Two electrons are provided by NADPH via a two-protein mitochondrial transfer system comprising flavoprotein FDXR (adrenodoxin/ferredoxin reductase) and nonheme iron-sulfur protein FDX1 or FDX2 (adrenodoxin/ferredoxin). This Bos taurus (Bovine) protein is Cholesterol side-chain cleavage enzyme, mitochondrial (CYP11A1).